A 140-amino-acid chain; its full sequence is ATP synthase epsilon chain (140 aa).

The protein belongs to the ATPase epsilon chain family. As to quaternary structure, F-type ATPases have 2 components, CF(1) - the catalytic core - and CF(0) - the membrane proton channel. CF(1) has five subunits: alpha(3), beta(3), gamma(1), delta(1), epsilon(1). CF(0) has three main subunits: a, b and c.

Its subcellular location is the cell inner membrane. Produces ATP from ADP in the presence of a proton gradient across the membrane. This Marinobacter nauticus (strain ATCC 700491 / DSM 11845 / VT8) (Marinobacter aquaeolei) protein is ATP synthase epsilon chain.